A 433-amino-acid chain; its full sequence is UDP-N-acetylglucosamine 1-carboxyvinyltransferase (433 aa).

22 to 23 (KN) contacts phosphoenolpyruvate. Arg-96 is a binding site for UDP-N-acetyl-alpha-D-glucosamine. The active-site Proton donor is the Cys-120. A 2-(S-cysteinyl)pyruvic acid O-phosphothioketal modification is found at Cys-120. Residues 125 to 129 (RPIDL), Asp-308, and Ile-330 each bind UDP-N-acetyl-alpha-D-glucosamine.

It belongs to the EPSP synthase family. MurA subfamily.

The protein resides in the cytoplasm. The catalysed reaction is phosphoenolpyruvate + UDP-N-acetyl-alpha-D-glucosamine = UDP-N-acetyl-3-O-(1-carboxyvinyl)-alpha-D-glucosamine + phosphate. The protein operates within cell wall biogenesis; peptidoglycan biosynthesis. In terms of biological role, cell wall formation. Adds enolpyruvyl to UDP-N-acetylglucosamine. This Koribacter versatilis (strain Ellin345) protein is UDP-N-acetylglucosamine 1-carboxyvinyltransferase.